We begin with the raw amino-acid sequence, 450 residues long: Beta-glucosidase (450 aa).

Glu-166 (proton donor) is an active-site residue. Catalysis depends on Glu-355, which acts as the Nucleophile.

It belongs to the glycosyl hydrolase 1 family.

It catalyses the reaction Hydrolysis of terminal, non-reducing beta-D-glucosyl residues with release of beta-D-glucose.. This Niallia circulans (Bacillus circulans) protein is Beta-glucosidase (bglA).